Here is a 179-residue protein sequence, read N- to C-terminus: Protein GrpE (179 aa).

Residues 1-22 (MTDNNIENNEEEIRKAPSANDR) are disordered. The segment covering 11–22 (EEIRKAPSANDR) has biased composition (basic and acidic residues).

This sequence belongs to the GrpE family. Homodimer.

It is found in the cytoplasm. Its function is as follows. Participates actively in the response to hyperosmotic and heat shock by preventing the aggregation of stress-denatured proteins, in association with DnaK and GrpE. It is the nucleotide exchange factor for DnaK and may function as a thermosensor. Unfolded proteins bind initially to DnaJ; upon interaction with the DnaJ-bound protein, DnaK hydrolyzes its bound ATP, resulting in the formation of a stable complex. GrpE releases ADP from DnaK; ATP binding to DnaK triggers the release of the substrate protein, thus completing the reaction cycle. Several rounds of ATP-dependent interactions between DnaJ, DnaK and GrpE are required for fully efficient folding. The polypeptide is Protein GrpE (Rickettsia canadensis (strain McKiel)).